The primary structure comprises 190 residues: UPF0301 protein Psyr_0485 (190 aa).

The protein belongs to the UPF0301 (AlgH) family.

The polypeptide is UPF0301 protein Psyr_0485 (Pseudomonas syringae pv. syringae (strain B728a)).